Here is a 369-residue protein sequence, read N- to C-terminus: UDP-N-acetylglucosamine--N-acetylmuramyl-(pentapeptide) pyrophosphoryl-undecaprenol N-acetylglucosamine transferase (369 aa).

UDP-N-acetyl-alpha-D-glucosamine is bound by residues 10 to 12 (TAG), Asn-124, Arg-161, Ser-195, and Gln-295.

This sequence belongs to the glycosyltransferase 28 family. MurG subfamily.

The protein resides in the cell membrane. The enzyme catalyses di-trans,octa-cis-undecaprenyl diphospho-N-acetyl-alpha-D-muramoyl-L-alanyl-D-glutamyl-meso-2,6-diaminopimeloyl-D-alanyl-D-alanine + UDP-N-acetyl-alpha-D-glucosamine = di-trans,octa-cis-undecaprenyl diphospho-[N-acetyl-alpha-D-glucosaminyl-(1-&gt;4)]-N-acetyl-alpha-D-muramoyl-L-alanyl-D-glutamyl-meso-2,6-diaminopimeloyl-D-alanyl-D-alanine + UDP + H(+). Its pathway is cell wall biogenesis; peptidoglycan biosynthesis. Its function is as follows. Cell wall formation. Catalyzes the transfer of a GlcNAc subunit on undecaprenyl-pyrophosphoryl-MurNAc-pentapeptide (lipid intermediate I) to form undecaprenyl-pyrophosphoryl-MurNAc-(pentapeptide)GlcNAc (lipid intermediate II). This chain is UDP-N-acetylglucosamine--N-acetylmuramyl-(pentapeptide) pyrophosphoryl-undecaprenol N-acetylglucosamine transferase, found in Acidothermus cellulolyticus (strain ATCC 43068 / DSM 8971 / 11B).